Reading from the N-terminus, the 57-residue chain is UPF0391 membrane protein Xaut_1725 (57 aa).

2 helical membrane-spanning segments follow: residues 4-24 (WAVTFLVVALIAAVLGFGGIA) and 30-50 (IAKIIFFVAIVLFVISAVAGL).

This sequence belongs to the UPF0391 family.

It localises to the cell membrane. The chain is UPF0391 membrane protein Xaut_1725 from Xanthobacter autotrophicus (strain ATCC BAA-1158 / Py2).